The following is a 569-amino-acid chain: Urease subunit alpha (569 aa).

The region spanning 131–569 (GGIDTHIHFI…LPLAQRYLLL (439 aa)) is the Urease domain. The Ni(2+) site is built by H136, H138, and K219. Position 219 is an N6-carboxylysine (K219). H221 contacts substrate. The Ni(2+) site is built by H248 and H274. Residue H322 is the Proton donor of the active site. D362 serves as a coordination point for Ni(2+).

This sequence belongs to the metallo-dependent hydrolases superfamily. Urease alpha subunit family. In terms of assembly, heterotrimer of UreA (gamma), UreB (beta) and UreC (alpha) subunits. Three heterotrimers associate to form the active enzyme. It depends on Ni cation as a cofactor. Post-translationally, carboxylation allows a single lysine to coordinate two nickel ions.

It localises to the cytoplasm. The catalysed reaction is urea + 2 H2O + H(+) = hydrogencarbonate + 2 NH4(+). It participates in nitrogen metabolism; urea degradation; CO(2) and NH(3) from urea (urease route): step 1/1. The polypeptide is Urease subunit alpha (Synechococcus sp. (strain CC9605)).